Consider the following 214-residue polypeptide: Osteoclast-stimulating factor 1 (214 aa).

Ser2 carries the N-acetylserine modification. Residues 12–71 form the SH3 domain; the sequence is GQVKVFRALYTFEPRTPDELYFEEGDIIYITDMSDTSWWKGTCKGRTGLIPSNYVAEQAE. ANK repeat units lie at residues 72–101, 105–135, and 139–168; these read SIDN…GVNG, AGST…ELNQ, and LGDT…RTDL. Thr200 bears the Phosphothreonine mark. Ser202 and Ser213 each carry phosphoserine.

In terms of assembly, interacts with SRC and SMN1. Interacts with FASLG.

It localises to the cytoplasm. In terms of biological role, induces bone resorption, acting probably through a signaling cascade which results in the secretion of factor(s) enhancing osteoclast formation and activity. The protein is Osteoclast-stimulating factor 1 (Ostf1) of Rattus norvegicus (Rat).